Reading from the N-terminus, the 99-residue chain is Malonate decarboxylase acyl carrier protein (99 aa).

Residue S25 is modified to O-(phosphoribosyl dephospho-coenzyme A)serine.

Belongs to the MdcC family. In terms of processing, covalently binds the prosthetic group of malonate decarboxylase.

It localises to the cytoplasm. In terms of biological role, subunit of malonate decarboxylase, it is an acyl carrier protein to which acetyl and malonyl thioester residues are bound via a 2'-(5''-phosphoribosyl)-3'-dephospho-CoA prosthetic group and turn over during the catalytic mechanism. This is Malonate decarboxylase acyl carrier protein from Pseudomonas aeruginosa (strain LESB58).